An 878-amino-acid chain; its full sequence is MTYHNDSTDLETLEIQELETEMDDSMHEEDIEFNEFVDNTSEFEEAESNQQNEAIDGEHIANDQSDMDSTMTQLVTANSSKPDSLYLLPVKERPFFPGQTLPIILDKNSWSKTIKKVIDEKIHYIGIIYVEADDHHKAKPKDFAKTGTLIRIHEPKIKEDYIQLIAEGVCRFQIADWLSSSAPFRARVNYPNDIRNGSPKEFKAYGLAIMNAFKELLPLNPLYSEELKYFLNRYSASDSQHLADFAASLTAASNEKLQDLLDTLDLSERLEKVLSLFKHEIEVTKLQFNIRERVEENLSQQQREFFLHQQLKEIQKELGMVKDDRTADADLFQERLDKLELSEEATKKAEEELGKINMLDPQSPEYGVARNWLDWLTQLPWGKYSDDKLDLGRARKILNKGHDGLDDVKDRILEFLAVGALKGEISGSIICLVGPPGVGKTSIGRSIADTLGRKFYRFSVGGMRDEAEIKGHRRTYIGAMPGKFVQALKDCETANPVIMLDEIDKIGSSYQGDPASALLEVLDPEQNSEFMDHYMDVRFDLSKTLFVCTANTLDSIPGPLLDRMEVIRLSGYITEEKIQIAKHHLWPSLLEDAGLNKKQIQITPATIRHVIEGYAREAGVRNLKKQLAKLIRKLAIKFVNGDMEQTTLHVNDLEEMLGQPRFTPEKTNQQMGTVTGLAWTSMGGATLTIEASRVHTLNRGFKLSGQLGDVMQESASIAYSYIASNLDKYKADPEFFDKAFVHLHVPDGATPKDGPSAGVTMATALLSLARNEAIKKPLAMTGELSLTGQVLPVGGIREKVIAARRVGIKELILPDENRKDYDELPDYLKEGMTLHFAKHFDDVAKLTFHIRSKSSALKKYLSKAVISTEEKTEQETTS.

Residues L85–I281 form the Lon N-terminal domain. G434 to T441 serves as a coordination point for ATP. The Lon proteolytic domain maps to N668 to I850. Active-site residues include S756 and K799.

Belongs to the peptidase S16 family. In terms of assembly, homohexamer. Organized in a ring with a central cavity.

The protein localises to the cytoplasm. It catalyses the reaction Hydrolysis of proteins in presence of ATP.. In terms of biological role, ATP-dependent serine protease that mediates the selective degradation of mutant and abnormal proteins as well as certain short-lived regulatory proteins. Required for cellular homeostasis and for survival from DNA damage and developmental changes induced by stress. Degrades polypeptides processively to yield small peptide fragments that are 5 to 10 amino acids long. Binds to DNA in a double-stranded, site-specific manner. This chain is Lon protease 2, found in Hydrogenovibrio crunogenus (strain DSM 25203 / XCL-2) (Thiomicrospira crunogena).